The chain runs to 1052 residues: Malignant fibrous histiocytoma-amplified sequence 1 (1052 aa).

An N-acetylalanine modification is found at Ala-2. 13 LRR repeats span residues 64–85 (DIEALNLGNNGLEEVPEGLGSA), 88–109 (SLRVLVLRRNRFARLPPAVAEL), 112–133 (HLTELDVSHNRLTALGAEVVSA), 136–157 (ELRKLNLSHNQLPALPAQLGAL), 159–180 (HLEELDVSFNRLAHLPDSLSCL), 182–203 (RLRTLDVDHNQLTAFPRQLLQL), 205–226 (ALEELDVSSNRLRGLPEDISAL), 228–249 (ALKILWLSGAELGTLPAGFCEL), 251–272 (SLESLMLDNNGLQALPAQFSCL), 274–296 (RLKMLNLSSNLFEEFPAALLPLA), 297–318 (GLEELYLSRNQLTSVPSLISGL), 320–341 (RLLTLWLDNNRIRYLPDSIVEL), and 343–364 (GLEELVLQGNQIAVLPDHFGQL). A required for interaction with PJA2 region spans residues 64 to 364 (DIEALNLGNN…AVLPDHFGQL (301 aa)). The required for interaction with PPP2R2A stretch occupies residues 64–649 (DIEALNLGNN…DKLLSVAEHR (586 aa)). The region spanning 403 to 649 (QPAVQPRLKL…DKLLSVAEHR (247 aa)) is the Roc domain. Residue Lys-601 is modified to N6-acetyllysine.

In terms of assembly, interacts with RAF1. Interacts with HSPD1. Interacts with PPP2CA; retains PPP2CA into the cytoplasm and excludes it from the nucleus. Interacts with PPP2R2A; the interaction is direct. Interacts with PJA2. Ubiquitinated. Ubiquitination by PJA2 does not lead MFHAS1 to proteasomal degradation but positively regulates its function in polarization of macrophages. Ubiquitously expressed. Overexpressed in malignant fibrous histiocytomas. Expressed in red blood cells (at protein level).

The protein localises to the cytoplasm. Its function is as follows. Probable GTP-binding protein. Functions in innate immunity and more specifically the inflammatory response as a regulator of the Toll-like receptor TLR2 and TLR4 signaling pathways. Negatively regulates the part of the TLR4 signaling pathway that leads to the activation of the transcription factor AP-1. By retaining the phosphatase complex PP2A into the cytoplasm, prevents the dephosphorylation of the AP-1 subunit JUN which is required for proper activation of the transcription factor. Both inhibits and activates the TLR2-dependent signaling pathway. Positively regulates the TLR2 signaling pathway to activate specifically the downstream p38 and JNK MAP kinases and promote the polarization of macrophages toward the pro-inflammatory M1 phenotype. It may also play a role in the regulation of inflammation induced by high glucose through the PKB/AKT signaling pathway. Also involved in erythrocyte differentiation through activation of the ERK1/ERK2 signaling pathway. In Homo sapiens (Human), this protein is Malignant fibrous histiocytoma-amplified sequence 1.